We begin with the raw amino-acid sequence, 253 residues long: Large ribosomal subunit protein uL4 (253 aa).

Positions 78–107 (SRAARVPHAKGGRRAHPPKPEADRSEKVNT) are disordered. The span at 82 to 94 (RVPHAKGGRRAHP) shows a compositional bias: basic residues. Positions 95–107 (PKPEADRSEKVNT) are enriched in basic and acidic residues.

The protein belongs to the universal ribosomal protein uL4 family. Part of the 50S ribosomal subunit.

Functionally, one of the primary rRNA binding proteins, this protein initially binds near the 5'-end of the 23S rRNA. It is important during the early stages of 50S assembly. It makes multiple contacts with different domains of the 23S rRNA in the assembled 50S subunit and ribosome. In terms of biological role, forms part of the polypeptide exit tunnel. This chain is Large ribosomal subunit protein uL4, found in Methanosarcina acetivorans (strain ATCC 35395 / DSM 2834 / JCM 12185 / C2A).